The sequence spans 452 residues: Cobyrinate a,c-diamide synthase (452 aa).

In terms of domain architecture, GATase cobBQ-type spans 244 to 429 (RIAVARDRAF…LHLHWGTQAW (186 aa)). Cysteine 325 (nucleophile) is an active-site residue.

This sequence belongs to the CobB/CbiA family. Mg(2+) serves as cofactor.

It carries out the reaction cob(II)yrinate + 2 L-glutamine + 2 ATP + 2 H2O = cob(II)yrinate a,c diamide + 2 L-glutamate + 2 ADP + 2 phosphate + 2 H(+). Its pathway is cofactor biosynthesis; adenosylcobalamin biosynthesis; cob(II)yrinate a,c-diamide from sirohydrochlorin (anaerobic route): step 10/10. Catalyzes the ATP-dependent amidation of the two carboxylate groups at positions a and c of cobyrinate, using either L-glutamine or ammonia as the nitrogen source. The polypeptide is Cobyrinate a,c-diamide synthase (Gloeobacter violaceus (strain ATCC 29082 / PCC 7421)).